Consider the following 881-residue polypeptide: Actin-like protein ARP8 (881 aa).

Residues 1 to 150 form a disordered region; sequence MSQEEAESSI…DPAKAPPGKK (150 aa). Composition is skewed to acidic residues over residues 14–33 and 44–54; these read EPIDIPLEDDDDEDELEEEN and ENAENESDDSV. A phosphoserine mark is found at Ser65 and Ser70. Residues 77–114 show a composition bias toward acidic residues; the sequence is ADEEDEDEEGEDEDEDEDDNDVDNEDENDNDNANENEN. 502 to 505 is an ATP binding site; that stretch reads NIGA.

Belongs to the actin family. In terms of assembly, component of the chromatin-remodeling INO80 complex, at least composed of ARP4, ARP5, ARP8, RVB1, RVB2, TAF14, NHP10, IES1, IES3, IES4, IES6, ACT1, IES2, IES5 and INO80. Exists as monomers and dimers, but the dimer is most probably the biologically relevant form required for stable interactions with histones that exploits the twofold symmetry of the nucleosome core.

The protein resides in the nucleus. The protein localises to the cytoplasm. It localises to the cytoskeleton. Probably involved in transcription regulation via its interaction with the INO80 complex, a chromatin remodeling complex. Exhibits low basal ATPase activity, and unable to polymerize. Strongly prefer nucleosomes and H3-H4 tetramers over H2A-H2B dimers, suggesting it may act as a nucleosome recognition module within the complex. The sequence is that of Actin-like protein ARP8 (ARP8) from Saccharomyces cerevisiae (strain ATCC 204508 / S288c) (Baker's yeast).